The following is a 517-amino-acid chain: Putative succinate-semialdehyde dehydrogenase [NADP(+)] (517 aa).

NADP(+)-binding positions include 157 to 158, 181 to 184, and 232 to 233; these read WN, KPDS, and GS. The Proton acceptor role is filled by E254. Position 255 (L255) interacts with NADP(+). C288 (nucleophile) is an active-site residue. Residue E386 participates in NADP(+) binding.

The protein belongs to the aldehyde dehydrogenase family.

It catalyses the reaction succinate semialdehyde + NADP(+) + H2O = succinate + NADPH + 2 H(+). Its function is as follows. Catalyzes the NADP(+)-dependent oxidation of succinate semialdehyde to succinate. Although it has succinate semialdehyde dehydrogenase activity, is likely to act physiologically on a different aldehyde(s). This Mycolicibacterium smegmatis (strain ATCC 700084 / mc(2)155) (Mycobacterium smegmatis) protein is Putative succinate-semialdehyde dehydrogenase [NADP(+)] (gabD2).